Consider the following 336-residue polypeptide: Ribosomal RNA large subunit methyltransferase F (336 aa).

Residues 1 to 24 (MPRPTSPHPDAERKSASPLHPRNR) are disordered.

Belongs to the methyltransferase superfamily. METTL16/RlmF family.

It localises to the cytoplasm. The enzyme catalyses adenosine(1618) in 23S rRNA + S-adenosyl-L-methionine = N(6)-methyladenosine(1618) in 23S rRNA + S-adenosyl-L-homocysteine + H(+). Its function is as follows. Specifically methylates the adenine in position 1618 of 23S rRNA. The protein is Ribosomal RNA large subunit methyltransferase F of Pseudomonas aeruginosa (strain LESB58).